A 122-amino-acid polypeptide reads, in one-letter code: Large ribosomal subunit protein uL14c (122 aa).

This sequence belongs to the universal ribosomal protein uL14 family. As to quaternary structure, part of the 50S ribosomal subunit.

Its subcellular location is the plastid. It is found in the chloroplast. Its function is as follows. Binds to 23S rRNA. The chain is Large ribosomal subunit protein uL14c from Citrus sinensis (Sweet orange).